The primary structure comprises 231 residues: Uridylate cyclase (231 aa).

A Guanylate cyclase domain is found at 46–178 (TVLYADLDGS…RAANYAAKLT (133 aa)). Tyrosine 49 is a binding site for a ribonucleoside 5'-triphosphate. Mn(2+)-binding residues include aspartate 51 and aspartate 95. Arginine 96 provides a ligand contact to a ribonucleoside 5'-triphosphate.

It belongs to the adenylyl cyclase class-4/guanylyl cyclase family. Pyrimidine cyclase subfamily. In terms of assembly, homodimer. Mn(2+) serves as cofactor.

Its subcellular location is the cytoplasm. It catalyses the reaction UTP = 3',5'-cyclic UMP + diphosphate. Pycsar (pyrimidine cyclase system for antiphage resistance) provides immunity against bacteriophage. The pyrimidine cyclase (PycC) synthesizes cyclic nucleotides in response to infection; these serve as specific second messenger signals. The signal activates the adjacent effector, leading to bacterial cell death and abortive phage infection. A clade B Pycsar system. In terms of biological role, the pyrimidine cyclase gene of a two-gene Pycsar system, generates cyclic UMP (cUMP) from UTP probably in response to bacteriophage infection. Expression of this and adjacent effector XpPycTIR (AC P0DV29) confers resistance to bacteriophage T7. When cells expressing the Pycsar system are infected phage T7 at low multiplicity of infection (0.2 MOI) the culture survives, at 2.0 MOI bacteria enter growth arrest. The same cells enter growth arrest after exposure to 2.5 mM cUMP but not cCMP; the effector protein responds only to the cUMP produced by its cognate NTP cyclase. This is Uridylate cyclase from Xanthomonas perforans.